A 231-amino-acid chain; its full sequence is Claudin-10 (231 aa).

The helical transmembrane segment at 1–21 threads the bilayer; sequence MASTALEIVAFVVSISGWVLV. The Extracellular portion of the chain corresponds to 22–80; that stretch reads SSTLPTDYWKVSTIDGTVITTATYFANLWKICVTDSTGVANCKEFPSMLALDGYIQACR. A helical transmembrane segment spans residues 81-101; it reads GLMIAAVSLGFFGSIFALFGM. Residues 102 to 115 lie on the Cytoplasmic side of the membrane; it reads KCTKVGGSDQAKAK. A helical transmembrane segment spans residues 116 to 136; that stretch reads IACLAGIVFILSGLCSMTGCS. Topologically, residues 137–160 are extracellular; it reads LYANKITTEFFDPLYMEQKYELGA. Residues 161-181 traverse the membrane as a helical segment; the sequence is ALFIGWAGASLCIIGGVIFCF. Residues 182-231 are Cytoplasmic-facing; sequence SISDNNKTPRMGYTYNGPTSAMSSRTKYQGGEGDFKTTGPSKQFDKNAYV.

Belongs to the claudin family. In terms of assembly, can form homodimers both in trans (interaction between CLDN10 molecules in opposing membranes) and in cis (interaction between CLDN10 molecules within one membrane). Interacts with CLDN19. As to expression, widely expressed, with highest expression detected in brain cortex, kidney and lung. In kidney, the expression is highest in medulla, with transcripts being detected in medullary thick ascending limb of Henle's loop (mTAL) and outer and inner medullary collecting ducts. Expressed in salivary glands and skin. Detected in kidney with transcripts being detected in PCT, mTAL and cortical collecting duct. Detected in uterus. Expressed in proximal tubules (at protein level). In terms of tissue distribution, only detected in kidney and uterus. As to expression, detected in kidney with transcripts being detected in PCT, mTAL and cortical collecting duct. Detected in uterus. Expressed in the inner ear where it is detected in organ of Corti, marginal cells of stria vascularis, Reissner's membrane and spiral limbus (at protein level).

Its subcellular location is the cell junction. It localises to the tight junction. The protein resides in the cell membrane. It is found in the endoplasmic reticulum. The catalysed reaction is Na(+)(in) = Na(+)(out). It catalyses the reaction Li(+)(in) = Li(+)(out). The enzyme catalyses K(+)(in) = K(+)(out). It carries out the reaction Rb(+)(in) = Rb(+)(out). The catalysed reaction is Cs(+)(in) = Cs(+)(out). It catalyses the reaction NH4(+)(in) = NH4(+)(out). The enzyme catalyses methylamine(out) = methylamine(in). It carries out the reaction Mg(2+)(in) = Mg(2+)(out). The catalysed reaction is Ca(2+)(in) = Ca(2+)(out). It catalyses the reaction Sr(2+)(in) = Sr(2+)(out). The enzyme catalyses chloride(in) = chloride(out). It carries out the reaction nitrate(in) = nitrate(out). In terms of biological role, forms paracellular channels: polymerizes in tight junction strands with cation- and anion-selective channels through the strands, conveying epithelial permeability in a process known as paracellular tight junction permeability. Its function is as follows. Forms cation-selective paracellular channels. In sweat glands and in the thick ascending limb (TAL) of Henle's loop in kidney, it controls paracellular sodium permeability which is essential for proper sweat production and renal function. Functionally, forms anion-selective paracellular channels. In renal proximal tubules, it conveys selective chloride over hydrogencarbonate anion permeability which is required for renal chloride reabsorption and salt homeostasis. The polypeptide is Claudin-10 (Mus musculus (Mouse)).